Consider the following 177-residue polypeptide: Secretion monitor (177 aa).

The signal sequence occupies residues Met1–Gly37.

The protein belongs to the SecM family.

Its subcellular location is the cytoplasm. It is found in the cytosol. The protein resides in the periplasm. In terms of biological role, regulates secA expression by translational coupling of the secM secA operon. Translational pausing at a specific Pro residue 5 residues before the end of the protein may allow disruption of a mRNA repressor helix that normally suppresses secA translation initiation. The protein is Secretion monitor of Yersinia pseudotuberculosis serotype O:1b (strain IP 31758).